An 810-amino-acid chain; its full sequence is MTTKTLPTLSMQQKNLLLEATRTIAPHWPLDKLIAVNPLWSLVDKPFDDISDELSALAGIKTYMSNETYRAWFDEGKISHHCLTKAAEHYGLNEQDALLEHLSQANNLPDSWRNIADLADQQRPANKMSWHDEITHQVSQFCAAHYQQQSPTLRQQNIDNELDLYSHWLEVTNEDKGLSIVMGEAKLTKFFHNLPTDKDALFALVIEELALDDQSLSFFAKALLLDINGWSSYLAYLNWSKGENNDNLAKDDHVESLLAIKMAWELVVWRYLKHTAPALLSTINTKWMAQKQAIPNLIQAHKDALITSKVWALALEYSEQKSLNQTLTTEPAHNTTQTRPELQAIFCIDVRSEVFRRALEQQSATIQTLGFAGFFGLPIEYKAKDSHYVRPQLPGLLQAAITVTESDSDKGHVHHQQKEARWYRWGHAAPAAFSMVESMGWWYAFKMFKQTLFSKRQEHPANRLAPNTHWQLTQQGVLLTDQDKAHLAKGILDTIKLTTYAPIVMLVGHGSHTSNNLHAAGLECGACGGQSGEVNVRVLASLLNDHKVRTLLNDMGMEIPSDTQFVPALHNTTTDQLTCFDQTKDAKPIDRKIKDWFEKAQFLAQQERAAKLDTALLDASDKQRSKAFSKRANDWSQVNPEWGLANNHSFIIAPRQKTRHLDLEGRSFLHDYDPQNDPDFAILERILTAPMLVTHWINMQYNLSVTDNFKFGCGNKVLHNAVGGNIGVFEGNGGDLRIGLSMQSLNDGQKWMHTPVRLAVYVTAPKSAIEKIAAKHDIVKHLIDNDWLYLFQWEDNKVARFYQQEWHAEK.

Residues Cys347, Asp349, His509, and Cys524 each contribute to the Zn(2+) site.

This sequence belongs to the inorganic carbon transporter (TC 9.A.2) DabA family. As to quaternary structure, forms a complex with DabB. Zn(2+) is required as a cofactor.

Its subcellular location is the cell inner membrane. Functionally, part of an energy-coupled inorganic carbon pump. The chain is Probable inorganic carbon transporter subunit DabA from Marinomonas sp. (strain MWYL1).